The sequence spans 185 residues: Dual specificity protein phosphatase 3 (185 aa).

Residues 28–179 (QPCNEVTPRI…LCQLNDRLAK (152 aa)) enclose the Tyrosine-protein phosphatase domain. Residue cysteine 124 is the Phosphocysteine intermediate of the active site.

The protein belongs to the protein-tyrosine phosphatase family. Non-receptor class dual specificity subfamily. Microtubule inner protein component of sperm flagellar doublet microtubules. Interacts with VRK3; this interaction activates DUSP3 phosphatase activity.

Its subcellular location is the nucleus. It is found in the cytoplasm. The protein resides in the cytoskeleton. It localises to the flagellum axoneme. It carries out the reaction O-phospho-L-tyrosyl-[protein] + H2O = L-tyrosyl-[protein] + phosphate. It catalyses the reaction O-phospho-L-seryl-[protein] + H2O = L-seryl-[protein] + phosphate. The catalysed reaction is O-phospho-L-threonyl-[protein] + H2O = L-threonyl-[protein] + phosphate. Functionally, shows activity both for tyrosine-protein phosphate and serine-protein phosphate, but displays a strong preference toward phosphotyrosines. Specifically dephosphorylates and inactivates ERK1 and ERK2. The sequence is that of Dual specificity protein phosphatase 3 (DUSP3) from Homo sapiens (Human).